The primary structure comprises 353 residues: Putative glycosyltransferase TagX (353 aa).

It belongs to the glycosyltransferase 2 family.

This Staphylococcus aureus (strain MRSA252) protein is Putative glycosyltransferase TagX (tagX).